A 621-amino-acid chain; its full sequence is MTDNAPITFDGKRFAAHLSTAPGVYRMYAADDTLLYVGKAGALRKRVASYFNGTPKNTRLTAMLAQVVRMDVTITRNEAEALLLENQLIKSLTPRYNVLLRDDKSYPYVLLTREAWPRIALHRGPQIVPGRYFGPYPGMTAVRDMLNLIHKLFKLRSCEDSVFRNRSRPCLQYQIGRCSAPCVNVVTHDNYTEAVHRVTLFLEGKSDLLAEELIQAMQVASEHLEFEQAARLRDLLTSLRSMQNRQYVDGRAADLDVLACAALSGHACVLLLSFRDGRNLGTRMFFPKTNGEERTAEILSAFVSQYYAEYPPPPEILLDQEIPDHTLLEAAFSRSSAHKISLRWNVRGERAGYVELAVRNAQVALSTELTSQRAQRVRSEAVRQLLGLEGPIKRVECFDISHTMGEATVASCVVFDAVGPVRSQYRRYNITGITPGDDYAAMRQAIERRFRRAVEEDKQGERPDVLFIDGGAGQLAQAKMALNAVGVESVLLVGVSKGEERRAGHETLIMLDGQELHPGAASPALQFIQQVRDEAHRFAITGHRARRQKTRMTSKLEDIPGIGSRRRANLLKHFGGLAGVKAAGQTEIARVEGISTALAAKIYASLHGLSKNDAANASRVS.

Residues 20–98 enclose the GIY-YIG domain; the sequence is TAPGVYRMYA…IKSLTPRYNV (79 aa). Residues 207–242 form the UVR domain; that stretch reads DLLAEELIQAMQVASEHLEFEQAARLRDLLTSLRSM.

This sequence belongs to the UvrC family. As to quaternary structure, interacts with UvrB in an incision complex.

It localises to the cytoplasm. Its function is as follows. The UvrABC repair system catalyzes the recognition and processing of DNA lesions. UvrC both incises the 5' and 3' sides of the lesion. The N-terminal half is responsible for the 3' incision and the C-terminal half is responsible for the 5' incision. The polypeptide is UvrABC system protein C (Xylella fastidiosa (strain Temecula1 / ATCC 700964)).